Consider the following 368-residue polypeptide: Probable staphylococcal-like nuclease CAN2 (368 aa).

G2 carries N-myristoyl glycine lipidation. C7 carries the S-palmitoyl cysteine lipid modification. Residues 16-56 (DHYPYYKPTSRPHYQPPHYHGQPAAPPAPLQQQHLGPHGVT) are disordered. Residues 27–38 (PHYQPPHYHGQP) are compositionally biased toward low complexity. The 177-residue stretch at 168-344 (NTLPVYDKCI…RAANRGLWAS (177 aa)) folds into the TNase-like domain. D181 provides a ligand contact to Ca(2+). The active site involves R251. Position 256 (D256) interacts with Ca(2+). Residues E259 and R293 contribute to the active site.

The protein belongs to the thermonuclease family. It depends on Ca(2+) as a cofactor.

It is found in the cell membrane. Functionally, enzyme that catalyzes the hydrolysis of both DNA and RNA at the 5' position of the phosphodiester bond. The chain is Probable staphylococcal-like nuclease CAN2 from Oryza sativa subsp. japonica (Rice).